We begin with the raw amino-acid sequence, 476 residues long: Exodeoxyribonuclease 7 large subunit (476 aa).

The protein belongs to the XseA family. As to quaternary structure, heterooligomer composed of large and small subunits.

The protein resides in the cytoplasm. It carries out the reaction Exonucleolytic cleavage in either 5'- to 3'- or 3'- to 5'-direction to yield nucleoside 5'-phosphates.. Bidirectionally degrades single-stranded DNA into large acid-insoluble oligonucleotides, which are then degraded further into small acid-soluble oligonucleotides. This is Exodeoxyribonuclease 7 large subunit from Bartonella tribocorum (strain CIP 105476 / IBS 506).